The chain runs to 572 residues: MAKYVVTSAWPYVNHVPHLGTLIGSVLSADIYARYLRLRGRQVVFVSGSDEHGTPIELEARKKGVHPKELTDQVHEYDVKMWREYRISFDNYSRTESPVHKEFVMEFMKKLEENGYIFSQEEVLPYCERDKIFLPDRFVEGTCPYCGYEKARGDQCDECGRLLHPTELKNPRCALCGSKPVYKSTRHWFIDLRRVQDRLLKWLESHGELQDSVKKYSINWVAQGLKPRSVTRDLSWGVPAPFKGAEGKTIYVWFDALLGYVSATKELFIMRRGDPEEWKSWWWDSGTRTVYFIGKDNIPFHAIILPALFLASHDPYVLPWRISATEYLMYEGQQFSKSRRIGVWIDEALEIAPADYWRWALARMRPEARDTNFTWKEFYRIVNTELNDDIGNFVNRVLSLVRSRMSGVAPEPEDLGEHQGFVERVRRAAWAVAEDLEAIRIKRATEGILEIAREGNAYLNRTQPWKLLSQDREEGVRALSAALYAVKTLAHLLAPFTPDAADRLWSMLGLAGSVHEAVWDEWLDRPLPGGARIVRVEPLFQKLPDDFLERVDEIVEDARRRAREKRPPLLRD.

The short motif at 11 to 21 (PYVNHVPHLGT) is the 'HIGH' region element. Zn(2+) contacts are provided by C143, C146, C156, and C159. A 'KMSKS' region motif is present at residues 334–338 (QFSKS). K337 contributes to the ATP binding site.

The protein belongs to the class-I aminoacyl-tRNA synthetase family. MetG type 1 subfamily. Requires Zn(2+) as cofactor.

The protein localises to the cytoplasm. The enzyme catalyses tRNA(Met) + L-methionine + ATP = L-methionyl-tRNA(Met) + AMP + diphosphate. Is required not only for elongation of protein synthesis but also for the initiation of all mRNA translation through initiator tRNA(fMet) aminoacylation. This is Methionine--tRNA ligase (metG) from Aeropyrum pernix (strain ATCC 700893 / DSM 11879 / JCM 9820 / NBRC 100138 / K1).